A 552-amino-acid polypeptide reads, in one-letter code: Hydroxylamine reductase (552 aa).

[2Fe-2S] cluster is bound by residues Cys3, Cys6, Cys18, and Cys25. Positions 250, 274, 318, 406, 434, 459, 493, and 495 each coordinate hybrid [4Fe-2O-2S] cluster. Cys406 is modified (cysteine persulfide).

Belongs to the HCP family. It depends on [2Fe-2S] cluster as a cofactor. Hybrid [4Fe-2O-2S] cluster serves as cofactor.

Its subcellular location is the cytoplasm. It catalyses the reaction A + NH4(+) + H2O = hydroxylamine + AH2 + H(+). In terms of biological role, catalyzes the reduction of hydroxylamine to form NH(3) and H(2)O. The sequence is that of Hydroxylamine reductase from Shewanella sediminis (strain HAW-EB3).